Consider the following 93-residue polypeptide: MSNVCTIAWIYGRVQGVGFRYTTQHEAQRLGLTGYAKNMDDGSVEVVACGDEAQVEKLIKWLKEGGPRSARVDKILTEPHSPHETLTDFSIRY.

Cys5 and Cys49 are disulfide-bonded. The 89-residue stretch at 5-93 folds into the Acylphosphatase-like domain; the sequence is CTIAWIYGRV…ETLTDFSIRY (89 aa). Catalysis depends on residues Arg20 and Asn38.

This sequence belongs to the acylphosphatase family.

The enzyme catalyses an acyl phosphate + H2O = a carboxylate + phosphate + H(+). In Salmonella arizonae (strain ATCC BAA-731 / CDC346-86 / RSK2980), this protein is Acylphosphatase.